The following is a 130-amino-acid chain: Ribonuclease VapC4 (130 aa).

Positions 7-130 (LADTSVFIGI…AMPDVEVITI (124 aa)) constitute a PINc domain. Mg(2+) is bound by residues D9 and D98.

Belongs to the PINc/VapC protein family. In terms of assembly, interacts with cognate antitoxin VapB4. Mg(2+) serves as cofactor.

The protein localises to the secreted. Functionally, toxic component of a type II toxin-antitoxin (TA) system. Probably exerts its toxic effect by binding to mRNA, inhibiting translation. Binds to, recognizes and cleaves ssRNA at ACGC and AC(A/U)GC sequences, usually between the G and C; cleavage is not very efficient, nor is cleavage required to inhibit protein synthesis. Upon expression in situ, in M.smegmatis or E.coli inhibits cell growth and colony formation; in at least E.coli also causes increased levels of cellular RNA. Its toxic effect is neutralized by coexpression with cognate antitoxin VapB4. This is Ribonuclease VapC4 from Mycobacterium tuberculosis (strain ATCC 25618 / H37Rv).